Here is a 253-residue protein sequence, read N- to C-terminus: MTMSQDSRSTPGSTVDPAEIAKFSKLSETWWDPKGKMAPLHKINPLRLTYIRDAACRKFERNAKSLNCLSGLRMLDIGCGAGLLCEPFTRLGAQVVGVDPSASNIAAAKLHAEKGHMSIDYRCTTIEEMDPRERFDIVLAMEVVEHVTDVGAFLGRCAAVLKPGGLMVVSTLNRNWKSFALAIVGAEYVLRWLPRGTHEWSKFVTPDELTKYLLDNRLVITEQSGVVYSPFADRWSLSSDMDVNYMVVAEQMV.

Residues Arg47, Gly78, Asp99, and Met141 each coordinate S-adenosyl-L-methionine.

The protein belongs to the methyltransferase superfamily. UbiG/COQ3 family.

It catalyses the reaction a 3-demethylubiquinol + S-adenosyl-L-methionine = a ubiquinol + S-adenosyl-L-homocysteine + H(+). It carries out the reaction a 3-(all-trans-polyprenyl)benzene-1,2-diol + S-adenosyl-L-methionine = a 2-methoxy-6-(all-trans-polyprenyl)phenol + S-adenosyl-L-homocysteine + H(+). The protein operates within cofactor biosynthesis; ubiquinone biosynthesis. O-methyltransferase that catalyzes the 2 O-methylation steps in the ubiquinone biosynthetic pathway. This chain is Ubiquinone biosynthesis O-methyltransferase, found in Bradyrhizobium sp. (strain ORS 278).